The chain runs to 209 residues: Protein ASG7 (209 aa).

Topologically, residues 1–49 (MTTLASSIEHKTKHLAAPFENDENPWMKKYCCQCKSCKMSVPVQPWLPR) are lumenal. Residues 50–70 (FFVFGILCPVFWLVNLLAWWF) traverse the membrane as a helical segment. The Cytoplasmic segment spans residues 71-184 (LQYWQPHELE…LLRKTFRDWN (114 aa)). Ser-121, Ser-123, and Ser-125 each carry phosphoserine. Residue Thr-153 is modified to Phosphothreonine. A helical membrane pass occupies residues 185–205 (LRSLLGLLIDSILIIFVVLLC). Over 206–209 (KKSR) the chain is Lumenal.

It localises to the endomembrane system. Functionally, required for receptor inhibition of inappropriately expressed a-factor receptor (STE3) in MAT a cells. Inhibits signaling by relocalizing the G protein beta-gamma (STE4-STE18) subunit to intracellular membranes. May also be a mechanism for the down-regulation of the mating pheromone response after the zygotic fusion event, promoting the transition of the new diploid cell to vegetative growth. The polypeptide is Protein ASG7 (ASG7) (Saccharomyces cerevisiae (strain ATCC 204508 / S288c) (Baker's yeast)).